The primary structure comprises 5381 residues: Protein purity of essence (5381 aa).

Disordered regions lie at residues 140–174, 339–364, 599–621, 683–709, 1162–1212, and 1632–1659; these read KHPE…PKLE, QQQT…TSKD, SPET…QKSA, RNDS…SSGS, SGGD…STET, and QAAQ…QSER. Residues 339 to 350 show a composition bias toward low complexity; sequence QQQTAAAASTSQ. 2 stretches are compositionally biased toward low complexity: residues 690–709 and 1167–1176; these read SPPS…SSGS and SSCTSAASSS. The span at 1632–1646 shows a compositional bias: polar residues; that stretch reads QAAQPNPSEESSQAC. Over residues 1647-1658 the composition is skewed to basic and acidic residues; it reads DHSEGGEQRQSE. A UBR-type zinc finger spans residues 1815–1884; that stretch reads KLCTFSQTQK…EDGSCQALSR (70 aa). 6 disordered regions span residues 1917–1939, 2443–2479, 2632–2652, 3037–3143, 3537–3562, and 4247–4280; these read KRSN…KDSI, KNTT…KQLT, PDDS…TATQ, VSAG…DNNE, KQQQ…DREK, and HHQQ…KEAA. Polar residues-rich tracts occupy residues 1920–1930, 2470–2479, 2643–2652, and 3048–3058; these read NTAPGATQQQH, SSQQHQKQLT, SGPTPVTATQ, and NVATDGSTLRT. Residues 3065–3075 are compositionally biased toward gly residues; sequence GSGGSESGGSG. A compositionally biased stretch (polar residues) spans 3084–3104; that stretch reads ARSSNFGDHPNTTPPRQSCSS. Positions 3119 to 3132 are enriched in gly residues; it reads SGSGGSASVPGGGL. Residues 4904–5374 form a UBR4 E3 catalytic module region; that stretch reads PSLKYILRFL…SFIEDLLASL (471 aa). Residues 5022–5136 form a HemiRING-type zinc finger; that stretch reads GLTCFICREG…SSYMQESTQR (115 aa). Cys5025, Cys5028, His5074, and Cys5077 together coordinate Zn(2+). Residues 5139–5374 form the UZI domain; the sequence is ISYTSSIHDL…SFIEDLLASL (236 aa).

Belongs to the UBR4 family.

Has a role in growth of the perineurial glial layer of the larval peripheral nerve. May have a role in male fertility and eye development or function. May bind calmodulin. The chain is Protein purity of essence from Drosophila pseudoobscura pseudoobscura (Fruit fly).